The following is a 546-amino-acid chain: Zinc finger and BTB domain-containing protein 7A (546 aa).

The BTB domain occupies 34–101 (CDVVILVEGQ…AYTATLTVST (68 aa)). Residues 189–288 (QEDEEEPDCN…SFVPTGAEAE (100 aa)) are disordered. 3 consecutive C2H2-type zinc fingers follow at residues 359-381 (QKCP…IRTH), 387-409 (YECN…MRKH), and 415-437 (YLCQ…MRVH). The C2H2-type 4; atypical zinc finger occupies 443–467 (YQCDSCFKTFVRSDHLHRHLKKDGC). The interval 463-546 (KKDGCNGIPS…AAEGSAPGPS (84 aa)) is disordered. The span at 534 to 546 (AGGAAEGSAPGPS) shows a compositional bias: low complexity.

The protein resides in the nucleus. Transcription factor that represses the transcription of a wide range of genes involved in cell proliferation and differentiation. Directly and specifically binds to the consensus sequence 5'-[GA][CA]GACCCCCCCCC-3' and represses transcription both by regulating the organization of chromatin and through the direct recruitment of transcription factors to gene regulatory regions. May also play a role, independently of its transcriptional activity, in double-strand break repair via classical non-homologous end joining/cNHEJ and in alternative splicing. The polypeptide is Zinc finger and BTB domain-containing protein 7A (Gallus gallus (Chicken)).